The sequence spans 817 residues: Exocyst complex component 6 (817 aa).

2 coiled-coil regions span residues 87-149 and 247-270; these read QSFV…DQIA and TDAE…EIEV.

Belongs to the SEC15 family. The exocyst complex is composed of sec-3/exoc1, sec-5/exoc2, sec-6/exoc3, sec-8/exoc4, sec-10/exoc5, sec-15/exoc6, exo-70/exoc7 and exo-84/exoc8.

In terms of biological role, component of the exocyst complex involved in the docking of exocytic vesicles with fusion sites on the plasma membrane. The sequence is that of Exocyst complex component 6 (sec-15) from Caenorhabditis elegans.